We begin with the raw amino-acid sequence, 318 residues long: Peroxisomal targeting signal 2 receptor (318 aa).

WD repeat units lie at residues 60 to 91 (DWND…QLWD), 104 to 136 (EHTQ…KVWD), 148 to 179 (GHES…RIWD), 191 to 222 (AHQT…RGWD), 235 to 266 (GHTY…RFWN), and 279 to 310 (HHTE…KIYD).

The protein belongs to the WD repeat peroxin-7 family. Interacts with PEX5; interaction only takes place when PEX7 is associated with cargo proteins. Interacts with VWA8.

The protein resides in the cytoplasm. It localises to the cytosol. It is found in the peroxisome matrix. Its function is as follows. Receptor required for the peroxisomal import of proteins containing a C-terminal PTS2-type peroxisomal targeting signal. Specifically binds to cargo proteins containing a PTS2 peroxisomal targeting signal in the cytosol. Cargo protein-binding triggers interaction with PEX5 and formation of a ternary complex composed of PEX5 and PEX7 along with PTS2-containing cargo proteins, which is tranlocated into peroxisomes by passing through the PEX13-PEX14 docking complex. The polypeptide is Peroxisomal targeting signal 2 receptor (Mus musculus (Mouse)).